The primary structure comprises 408 residues: Aminomethyltransferase, mitochondrial (408 aa).

A mitochondrion-targeting transit peptide spans 1–30; sequence MRGGGLWQLGQSVTRRLAQAEKKVIARRCF. Substrate contacts are provided by Glu235, Arg266, and Tyr404.

This sequence belongs to the GcvT family. As to quaternary structure, the glycine cleavage system is composed of four proteins: P, T, L and H.

It localises to the mitochondrion. The catalysed reaction is N(6)-[(R)-S(8)-aminomethyldihydrolipoyl]-L-lysyl-[protein] + (6S)-5,6,7,8-tetrahydrofolate = N(6)-[(R)-dihydrolipoyl]-L-lysyl-[protein] + (6R)-5,10-methylene-5,6,7,8-tetrahydrofolate + NH4(+). The glycine cleavage system catalyzes the degradation of glycine. The polypeptide is Aminomethyltransferase, mitochondrial (GDCST) (Mesembryanthemum crystallinum (Common ice plant)).